We begin with the raw amino-acid sequence, 86 residues long: U2-sicaritoxin-Li1a (86 aa).

The first 20 residues, Met-1–Ala-20, serve as a signal peptide directing secretion. The propeptide occupies Glu-21 to Arg-33. 4 cysteine pairs are disulfide-bonded: Cys-35/Cys-53, Cys-42/Cys-62, Cys-52/Cys-71, and Cys-64/Cys-69.

Belongs to the neurotoxin 39 family. As to expression, expressed by the venom gland.

The protein resides in the secreted. In terms of biological role, toxin active against S.frugiperda larvae. May act on sodium channels (Nav). The chain is U2-sicaritoxin-Li1a from Loxosceles intermedia (Brown spider).